The chain runs to 191 residues: Molybdenum cofactor guanylyltransferase (191 aa).

Residues 11 to 13, K23, D66, and D97 each bind GTP; that span reads LCG. D97 serves as a coordination point for Mg(2+).

The protein belongs to the MobA family. Monomer. The cofactor is Mg(2+).

The protein resides in the cytoplasm. It catalyses the reaction Mo-molybdopterin + GTP + H(+) = Mo-molybdopterin guanine dinucleotide + diphosphate. Functionally, transfers a GMP moiety from GTP to Mo-molybdopterin (Mo-MPT) cofactor (Moco or molybdenum cofactor) to form Mo-molybdopterin guanine dinucleotide (Mo-MGD) cofactor. The polypeptide is Molybdenum cofactor guanylyltransferase (Campylobacter jejuni subsp. doylei (strain ATCC BAA-1458 / RM4099 / 269.97)).